The chain runs to 304 residues: N-carbamoyl-D-amino acid hydrolase (304 aa).

Residues 5 to 276 (MILAVGQQGP…DEVITAAVCL (272 aa)) enclose the CN hydrolase domain. Residues Glu47, Lys127, and Cys172 contribute to the active site.

Homotetramer.

It catalyses the reaction an N-carbamoyl-D-amino acid + H2O + 2 H(+) = a D-alpha-amino acid + NH4(+) + CO2. The activity decreases with increasing concentration of H(2)O(2). Has 68% and 43% of activity remaining upon treatment with 0.1 and 0.2 mM H(2)O(2) for 30 minutes, respectively. Inhibited significantly by 2 mM Zn(2+), Cu(2+) and Ag(+), moderately by Co(2+), Mn(2+), Sn(2+) and Mg(2+), and only slightly by Ba(2+). Slightly activated by Fe(2+) and Ca(2+). No effect on activity by metal chelators EDTA and 8-hydroxyquinoline at 2 mM or by dithiothreitol, 2-mercaptoethanol or phenylmethanesulfonyl fluoride. In terms of biological role, catalyzes the hydrolysis of N-carbamoyl-D-amino acids to the corresponding D-amino acids. Hydrolyzes aromatic and aliphatic N-carbamoyl-D-amino acids in vitro. Effectively hydrolyzes N-carbamoyl-D-p-hydroxyphenylglycine and N-carbamoyl-DL-p-hydroxyphenylglycine, and to a lesser extent N-carbamoyl-D-methionine. No activity for N-carbamoyl-L-amino acids, N-carbamoyl-beta-alanine or (RS)-alpha-ethyl-N-carbamoylphenylglycine in vitro. This chain is N-carbamoyl-D-amino acid hydrolase, found in Ensifer adhaerens (Sinorhizobium morelense).